A 289-amino-acid polypeptide reads, in one-letter code: 3-methyl-2-oxobutanoate hydroxymethyltransferase (289 aa).

Residues 1-15 (MSTTFQLDTSTSRAN) are compositionally biased toward polar residues. The tract at residues 1–20 (MSTTFQLDTSTSRANPTPAP) is disordered. Mg(2+) is bound by residues aspartate 67 and aspartate 106. 3-methyl-2-oxobutanoate-binding positions include 67-68 (DS), aspartate 106, and lysine 136. Glutamate 138 provides a ligand contact to Mg(2+). Glutamate 205 functions as the Proton acceptor in the catalytic mechanism.

Belongs to the PanB family. As to quaternary structure, homodecamer; pentamer of dimers. Mg(2+) is required as a cofactor.

The protein localises to the cytoplasm. It carries out the reaction 3-methyl-2-oxobutanoate + (6R)-5,10-methylene-5,6,7,8-tetrahydrofolate + H2O = 2-dehydropantoate + (6S)-5,6,7,8-tetrahydrofolate. The protein operates within cofactor biosynthesis; (R)-pantothenate biosynthesis; (R)-pantoate from 3-methyl-2-oxobutanoate: step 1/2. Catalyzes the reversible reaction in which hydroxymethyl group from 5,10-methylenetetrahydrofolate is transferred onto alpha-ketoisovalerate to form ketopantoate. The protein is 3-methyl-2-oxobutanoate hydroxymethyltransferase of Novosphingobium aromaticivorans (strain ATCC 700278 / DSM 12444 / CCUG 56034 / CIP 105152 / NBRC 16084 / F199).